A 129-amino-acid chain; its full sequence is Glycine cleavage system H protein (129 aa).

A Lipoyl-binding domain is found at 24–106 (LLKIGVSEFA…IGEGWLVILK (83 aa)). Residue Lys65 is modified to N6-lipoyllysine.

This sequence belongs to the GcvH family. In terms of assembly, the glycine cleavage system is composed of four proteins: P, T, L and H. (R)-lipoate is required as a cofactor.

Functionally, the glycine cleavage system catalyzes the degradation of glycine. The H protein shuttles the methylamine group of glycine from the P protein to the T protein. The polypeptide is Glycine cleavage system H protein (Prochlorococcus marinus (strain MIT 9312)).